A 931-amino-acid chain; its full sequence is Elicitor of plant defense protein 1 (931 aa).

The interval 13–32 (NYNSVIPPPEPLNTDPDMHP) is disordered. The region spanning 19-277 (PPPEPLNTDP…NLCTEAFNPL (259 aa)) is the uDENN domain. The region spanning 301 to 433 (EIPGSRSIDL…ARRKLMSLLQ (133 aa)) is the cDENN domain. In terms of domain architecture, dDENN spans 435–799 (AAPHKLRYGV…DREMQPANNA (365 aa)). Disordered stretches follow at residues 478-552 (LGKW…SRSD) and 566-586 (SGHFGEEKMRRSSSFGIDKHP). The span at 521–537 (TSKSGKTSPQSSVSPVS) shows a compositional bias: polar residues. Residues 566 to 575 (SGHFGEEKMR) are compositionally biased toward basic and acidic residues. The Phorbol-ester/DAG-type zinc-finger motif lies at 666 to 714 (GHCFNWIPKDNTSICNICNDHAEGDGIYKCTGCKIFSHGRCLGHASLVC).

The protein belongs to the EPD1 elicitor family.

It is found in the secreted. The protein resides in the host cell. Functionally, acts as an elicitor that triggers cell death and defense responses in the host plants. This Fusarium odoratissimum (strain NRRL 54006) protein is Elicitor of plant defense protein 1.